The sequence spans 155 residues: Ribonuclease H (155 aa).

An RNase H type-1 domain is found at 4 to 145; sequence NISKVVIYTD…ADKLAAQGRQ (142 aa). Mg(2+) is bound by residues aspartate 13, glutamate 51, aspartate 73, and aspartate 137.

This sequence belongs to the RNase H family. Monomer. The cofactor is Mg(2+).

Its subcellular location is the cytoplasm. The catalysed reaction is Endonucleolytic cleavage to 5'-phosphomonoester.. Its function is as follows. Endonuclease that specifically degrades the RNA of RNA-DNA hybrids. This is Ribonuclease H from Rickettsia canadensis (strain McKiel).